The sequence spans 934 residues: Glycine dehydrogenase (decarboxylating) (934 aa).

K687 is modified (N6-(pyridoxal phosphate)lysine).

This sequence belongs to the GcvP family. As to quaternary structure, the glycine cleavage system is composed of four proteins: P, T, L and H. The cofactor is pyridoxal 5'-phosphate.

It carries out the reaction N(6)-[(R)-lipoyl]-L-lysyl-[glycine-cleavage complex H protein] + glycine + H(+) = N(6)-[(R)-S(8)-aminomethyldihydrolipoyl]-L-lysyl-[glycine-cleavage complex H protein] + CO2. Functionally, the glycine cleavage system catalyzes the degradation of glycine. The P protein binds the alpha-amino group of glycine through its pyridoxal phosphate cofactor; CO(2) is released and the remaining methylamine moiety is then transferred to the lipoamide cofactor of the H protein. This is Glycine dehydrogenase (decarboxylating) from Nocardia farcinica (strain IFM 10152).